Here is a 62-residue protein sequence, read N- to C-terminus: Sperm protamine P1 (62 aa).

The disordered stretch occupies residues Met1–Tyr62.

It belongs to the protamine P1 family. As to expression, testis.

It is found in the nucleus. Its subcellular location is the chromosome. Functionally, protamines substitute for histones in the chromatin of sperm during the haploid phase of spermatogenesis. They compact sperm DNA into a highly condensed, stable and inactive complex. This chain is Sperm protamine P1 (PRM1), found in Bettongia penicillata (Brush-tailed bettong).